The chain runs to 437 residues: Glutamate-1-semialdehyde 2,1-aminomutase (437 aa).

K279 is modified (N6-(pyridoxal phosphate)lysine).

The protein belongs to the class-III pyridoxal-phosphate-dependent aminotransferase family. HemL subfamily. As to quaternary structure, homodimer. The cofactor is pyridoxal 5'-phosphate.

Its subcellular location is the cytoplasm. It carries out the reaction (S)-4-amino-5-oxopentanoate = 5-aminolevulinate. It participates in porphyrin-containing compound metabolism; protoporphyrin-IX biosynthesis; 5-aminolevulinate from L-glutamyl-tRNA(Glu): step 2/2. This Sorangium cellulosum (strain So ce56) (Polyangium cellulosum (strain So ce56)) protein is Glutamate-1-semialdehyde 2,1-aminomutase.